Here is a 222-residue protein sequence, read N- to C-terminus: Putative thymidylate synthase (222 aa).

Cysteine 139 is a catalytic residue.

This sequence belongs to the thymidylate synthase family. Archaeal-type ThyA subfamily. Monomer.

The protein localises to the cytoplasm. It functions in the pathway pyrimidine metabolism; dTTP biosynthesis. Functionally, may catalyze the biosynthesis of dTMP using an unknown cosubstrate. This chain is Putative thymidylate synthase, found in Methanocaldococcus jannaschii (strain ATCC 43067 / DSM 2661 / JAL-1 / JCM 10045 / NBRC 100440) (Methanococcus jannaschii).